The primary structure comprises 155 residues: MTRSSSVDVVVRHFFLSLNIRRGRITGTPMIPYNGHNGAIEYNTNVAKNQQKILNIIFRNPILPPNIQSFKKSNSIPNIVKTINNANTVTTSANTPIPTSPKLEEINPSIIIPIHKTENIIPPIIKKIHAIRNIITITLIMSSIKSNIIKSPPKN.

This is an uncharacterized protein from Methanocaldococcus jannaschii (strain ATCC 43067 / DSM 2661 / JAL-1 / JCM 10045 / NBRC 100440) (Methanococcus jannaschii).